A 172-amino-acid polypeptide reads, in one-letter code: 3-phenylpropionate/cinnamic acid dioxygenase subunit beta (172 aa).

The protein belongs to the bacterial ring-hydroxylating dioxygenase beta subunit family. This dioxygenase system consists of four proteins: the two subunits of the hydroxylase component (HcaE and HcaF), a ferredoxin (HcaC) and a ferredoxin reductase (HcaD).

The catalysed reaction is 3-phenylpropanoate + NADH + O2 + H(+) = 3-(cis-5,6-dihydroxycyclohexa-1,3-dien-1-yl)propanoate + NAD(+). The enzyme catalyses (E)-cinnamate + NADH + O2 + H(+) = (2E)-3-(cis-5,6-dihydroxycyclohexa-1,3-dien-1-yl)prop-2-enoate + NAD(+). Its pathway is aromatic compound metabolism; 3-phenylpropanoate degradation. Part of the multicomponent 3-phenylpropionate dioxygenase. Converts 3-phenylpropionic acid (PP) and cinnamic acid (CI) into 3-phenylpropionate-dihydrodiol (PP-dihydrodiol) and cinnamic acid-dihydrodiol (CI-dihydrodiol), respectively. In Escherichia coli O157:H7, this protein is 3-phenylpropionate/cinnamic acid dioxygenase subunit beta.